The following is a 296-amino-acid chain: tRNA dimethylallyltransferase (296 aa).

Residue 10–17 (GPTASGKT) coordinates ATP. Position 12–17 (12–17 (TASGKT)) interacts with substrate. Residues 35-38 (DSRQ) form an interaction with substrate tRNA region.

This sequence belongs to the IPP transferase family. In terms of assembly, monomer. The cofactor is Mg(2+).

It catalyses the reaction adenosine(37) in tRNA + dimethylallyl diphosphate = N(6)-dimethylallyladenosine(37) in tRNA + diphosphate. Functionally, catalyzes the transfer of a dimethylallyl group onto the adenine at position 37 in tRNAs that read codons beginning with uridine, leading to the formation of N6-(dimethylallyl)adenosine (i(6)A). This Synechococcus sp. (strain RCC307) protein is tRNA dimethylallyltransferase.